Reading from the N-terminus, the 234-residue chain is Small ribosomal subunit protein uS2 (234 aa).

It belongs to the universal ribosomal protein uS2 family.

This Clostridium kluyveri (strain NBRC 12016) protein is Small ribosomal subunit protein uS2.